The following is a 450-amino-acid chain: Envelope glycoprotein M (450 aa).

Residues 1–31 (MARRGAAVAEEPLLPSSGIVGIGPIEGINWR) are Intravirion-facing. Residues 32 to 52 (TWLVQVFCFALTTSVLFITLV) form a helical membrane-spanning segment. Residues 53 to 101 (TASLPQTGYPCFYGSLVDYTQKNHSVVDGVWMRQIAGGVAPTLFLETTS) are Virion surface-facing. Residues 102 to 122 (LVAFLYYTTLVLVAISFYLII) traverse the membrane as a helical segment. At 123 to 153 (SAVLVRRYARGKECTAVAGCTRPTTTLIASH) the chain is on the intravirion side. The chain crosses the membrane as a helical span at residues 154–174 (VTLVLGTLATWLLQVVILLLS). At 175–178 (HKQA) the chain is on the virion surface side. A helical transmembrane segment spans residues 179–199 (VLGAAVYVVHFVSLVFFCMSF). Topologically, residues 200–236 (SGLGTASAQYSSNLRILKTNLPALHKMAGPGRAVMTN) are intravirion. Residues 237-257 (LGMGMLGISLPILSLMLGIIL) traverse the membrane as a helical segment. At 258–270 (ANSFHITLWQTVT) the chain is on the virion surface side. Residues 271–291 (VAVGVFVALGLMFLIIVELIV) traverse the membrane as a helical segment. The Intravirion segment spans residues 292–294 (SHY). Residues 295 to 315 (VHVLVGPALAVLVASSTLAVA) traverse the membrane as a helical segment. The Virion surface segment spans residues 316–334 (THSYFVHFHAMVSVQAPNL). The chain crosses the membrane as a helical span at residues 335-355 (ATASKAIVGIMAVISIIMLVV). The Intravirion portion of the chain corresponds to 356-450 (RLVRAIMFHK…PERSHRREYR (95 aa)).

This sequence belongs to the herpesviridae glycoprotein M family. In terms of assembly, interacts (via N-terminus) with gN (via N-terminus). The gM-gN heterodimer forms the gCII complex.

The protein resides in the virion membrane. It localises to the host Golgi apparatus. It is found in the host trans-Golgi network. The protein localises to the host endosome membrane. Its subcellular location is the host nucleus inner membrane. Functionally, envelope glycoprotein important for virion assembly and egress. Plays a role in the correct incorporation of gH-gL into virion membrane. Directs the glycoprotein N (gN) to the host trans-Golgi network. In Equus caballus (Horse), this protein is Envelope glycoprotein M.